Here is a 371-residue protein sequence, read N- to C-terminus: Putative phosphoserine aminotransferase (371 aa).

L-glutamate is bound at residue Arg-45. The pyridoxal 5'-phosphate site is built by Phe-103, Thr-149, Asp-171, and Gln-194. N6-(pyridoxal phosphate)lysine is present on Lys-195. 246-247 (NT) is a binding site for pyridoxal 5'-phosphate.

This sequence belongs to the class-V pyridoxal-phosphate-dependent aminotransferase family. SerC subfamily. In terms of assembly, homodimer. The cofactor is pyridoxal 5'-phosphate.

It localises to the cytoplasm. It catalyses the reaction O-phospho-L-serine + 2-oxoglutarate = 3-phosphooxypyruvate + L-glutamate. The enzyme catalyses 4-(phosphooxy)-L-threonine + 2-oxoglutarate = (R)-3-hydroxy-2-oxo-4-phosphooxybutanoate + L-glutamate. The protein operates within amino-acid biosynthesis; L-serine biosynthesis; L-serine from 3-phospho-D-glycerate: step 2/3. It participates in cofactor biosynthesis; pyridoxine 5'-phosphate biosynthesis; pyridoxine 5'-phosphate from D-erythrose 4-phosphate: step 3/5. In terms of biological role, catalyzes the reversible conversion of 3-phosphohydroxypyruvate to phosphoserine and of 3-hydroxy-2-oxo-4-phosphonooxybutanoate to phosphohydroxythreonine. This chain is Putative phosphoserine aminotransferase, found in Mycolicibacterium vanbaalenii (strain DSM 7251 / JCM 13017 / BCRC 16820 / KCTC 9966 / NRRL B-24157 / PYR-1) (Mycobacterium vanbaalenii).